The sequence spans 72 residues: UPF0352 protein Shal_2512 (72 aa).

The protein belongs to the UPF0352 family.

In Shewanella halifaxensis (strain HAW-EB4), this protein is UPF0352 protein Shal_2512.